The following is a 699-amino-acid chain: Polyribonucleotide nucleotidyltransferase (699 aa).

Positions 485 and 491 each coordinate Mg(2+). Residues 552–611 (PRITTIKINPEKIRDVIGKGGAVIRALTEETGTTIELEDDGTVKIASSNGEATKEAIRRI) enclose the KH domain. Residues 621 to 689 (GRIYNGKVIR…RQGRVRLSIK (69 aa)) enclose the S1 motif domain.

The protein belongs to the polyribonucleotide nucleotidyltransferase family. Component of the RNA degradosome, which is a multiprotein complex involved in RNA processing and mRNA degradation. The cofactor is Mg(2+).

The protein localises to the cytoplasm. The enzyme catalyses RNA(n+1) + phosphate = RNA(n) + a ribonucleoside 5'-diphosphate. In terms of biological role, involved in mRNA degradation. Catalyzes the phosphorolysis of single-stranded polyribonucleotides processively in the 3'- to 5'-direction. This is Polyribonucleotide nucleotidyltransferase from Shewanella sp. (strain MR-7).